Consider the following 756-residue polypeptide: Inactive carboxypeptidase-like protein X2 (756 aa).

Residues 1–25 form the signal peptide; it reads MSRPGTATPALALVLLAVTLAGVGA. Residues 51–131 form a disordered region; that stretch reads EPELETFSPP…DHSVRVARED (81 aa). A compositionally biased stretch (basic and acidic residues) spans 68–78; it reads EWERRPQEPRP. Positions 79–90 are enriched in basic residues; sequence PKRATKPKKAPK. Positions 113–131 are enriched in basic and acidic residues; that stretch reads KSSEKAANDDHSVRVARED. Residues 134 to 293 form the F5/8 type C domain; it reads ESCPPLGLET…ICMRMEILGC (160 aa). Cys-136 and Cys-293 are oxidised to a cystine. N-linked (GlcNAc...) asparagine glycans are attached at residues Asn-231, Asn-241, Asn-281, Asn-337, and Asn-491. Residues 317–640 form the Peptidase M14 domain; it reads KHHNYKEMRQ…ESLIVFMEQV (324 aa).

This sequence belongs to the peptidase M14 family.

It localises to the secreted. Functionally, may be involved in cell-cell interactions. The sequence is that of Inactive carboxypeptidase-like protein X2 (CPXM2) from Homo sapiens (Human).